A 184-amino-acid polypeptide reads, in one-letter code: Putative NAD(P)H nitroreductase HI_1542 (184 aa).

FMN contacts are provided by residues 10 to 12, R35, and H39; that span reads RKS. An NAD(+)-binding site is contributed by 122-127; sequence AAQAQG. 132–134 is an FMN binding site; it reads WIS.

It belongs to the nitroreductase family. Homodimer. The cofactor is FMN.

The polypeptide is Putative NAD(P)H nitroreductase HI_1542 (Haemophilus influenzae (strain ATCC 51907 / DSM 11121 / KW20 / Rd)).